The sequence spans 767 residues: Transducin-like enhancer protein 1 (767 aa).

Disordered regions lie at residues 1–26 (MFPQ…PPQS) and 200–346 (ADAE…TSAS). Basic and acidic residues-rich tracts occupy residues 200-209 (ADAEHRERDP), 235-255 (RKTE…RSED), and 277-289 (NGVD…RKDP). The segment at 212–274 (SCLTLPNGER…SPHSVHSYSS (63 aa)) is CCN domain. Low complexity predominate over residues 294–306 (PNSMTSSSSVSPS). The segment covering 324–346 (LKSSTPNSQSDLNTPGPSGTSAS) has biased composition (polar residues). 6 WD repeats span residues 467–498 (GIPR…HVYT), 525–555 (NRDN…SIWD), 569–599 (SSAP…VVWD), 611–641 (GHTD…RCWD), 693–723 (LHES…NAWR), and 734–764 (KESS…TVYE).

It belongs to the WD repeat Groucho/TLE family. In terms of processing, ubiquitinated by XIAP/BIRC4. As to expression, abundantly expressed in brain, lung, testis and ovary in comparison with liver, heart, kidney and spleen. Ubiquitously expressed in the developing embryo. Present in unfertilized and fertilized eggs.

It is found in the nucleus. Its function is as follows. Nuclear effector molecule. The chain is Transducin-like enhancer protein 1 (esg1) from Xenopus laevis (African clawed frog).